The sequence spans 142 residues: Phosphoribosyl-AMP cyclohydrolase (142 aa).

Aspartate 92 contacts Mg(2+). Zn(2+) is bound at residue cysteine 93. Aspartate 94 and aspartate 96 together coordinate Mg(2+). Zn(2+)-binding residues include cysteine 109 and cysteine 116.

The protein belongs to the PRA-CH family. As to quaternary structure, homodimer. It depends on Mg(2+) as a cofactor. Zn(2+) serves as cofactor.

It is found in the cytoplasm. The catalysed reaction is 1-(5-phospho-beta-D-ribosyl)-5'-AMP + H2O = 1-(5-phospho-beta-D-ribosyl)-5-[(5-phospho-beta-D-ribosylamino)methylideneamino]imidazole-4-carboxamide. The protein operates within amino-acid biosynthesis; L-histidine biosynthesis; L-histidine from 5-phospho-alpha-D-ribose 1-diphosphate: step 3/9. In terms of biological role, catalyzes the hydrolysis of the adenine ring of phosphoribosyl-AMP. This Alcanivorax borkumensis (strain ATCC 700651 / DSM 11573 / NCIMB 13689 / SK2) protein is Phosphoribosyl-AMP cyclohydrolase.